Here is a 689-residue protein sequence, read N- to C-terminus: FAST kinase domain-containing protein 2, mitochondrial (689 aa).

A phosphoserine mark is found at Ser-113 and Ser-126. Positions 617-674 constitute an RAP domain; sequence VAVLCVPKSVYCLNSCHPRGLMAMKIRHLNVMGFHVILIHNWELKKLKMEDAVTFVRK.

The protein belongs to the FAST kinase family. As to quaternary structure, monomer. Found in a complex with GRSF1, DDX28, DHX30 and FASTKD5. Associates with the 16S mitochondrial rRNA (16S mt-rRNA). Forms a regulatory protein-RNA complex, consisting of RCC1L, NGRN, RPUSD3, RPUSD4, TRUB2, FASTKD2 and 16S mt-rRNA. In terms of tissue distribution, ubiquitously expressed. Expression detected in spleen, testis, colon, heart, smooth muscle, kidney, brain, lung, liver, brown and white adipose tissue with highest expression in testis, heart and smooth muscle.

The protein localises to the mitochondrion matrix. It is found in the mitochondrion nucleoid. Functionally, plays an important role in assembly of the mitochondrial large ribosomal subunit. As a component of a functional protein-RNA module, consisting of RCC1L, NGRN, RPUSD3, RPUSD4, TRUB2, FASTKD2 and 16S mitochondrial ribosomal RNA (16S mt-rRNA), controls 16S mt-rRNA abundance and is required for intra-mitochondrial translation. May play a role in mitochondrial apoptosis. The chain is FAST kinase domain-containing protein 2, mitochondrial (Fastkd2) from Mus musculus (Mouse).